Consider the following 206-residue polypeptide: Inosine triphosphate pyrophosphatase (206 aa).

ITP is bound at residue 21 to 26 (TGNAKK). Glu49 is a binding site for Mg(2+). Residues Lys61, 77–78 (DT), Lys94, 153–156 (FGWD), Lys176, and 181–182 (HR) contribute to the ITP site.

Belongs to the HAM1 NTPase family. Homodimer. It depends on Mg(2+) as a cofactor. Mn(2+) is required as a cofactor.

Its subcellular location is the cytoplasm. The enzyme catalyses ITP + H2O = IMP + diphosphate + H(+). It catalyses the reaction dITP + H2O = dIMP + diphosphate + H(+). It carries out the reaction XTP + H2O = XMP + diphosphate + H(+). In terms of biological role, pyrophosphatase that hydrolyzes non-canonical purine nucleotides such as inosine triphosphate (ITP), deoxyinosine triphosphate (dITP) or xanthosine 5'-triphosphate (XTP) to their respective monophosphate derivatives. The enzyme does not distinguish between the deoxy- and ribose forms. Probably excludes non-canonical purines from RNA and DNA precursor pools, thus preventing their incorporation into RNA and DNA and avoiding chromosomal lesions. The chain is Inosine triphosphate pyrophosphatase from Vitis vinifera (Grape).